The sequence spans 223 residues: Ribose-5-phosphate isomerase A (223 aa).

Substrate-binding positions include 29–32 (TGST), 82–85 (DGAD), and 95–98 (KGGG). Glutamate 104 serves as the catalytic Proton acceptor. Lysine 122 contributes to the substrate binding site.

It belongs to the ribose 5-phosphate isomerase family. Homodimer.

The enzyme catalyses aldehydo-D-ribose 5-phosphate = D-ribulose 5-phosphate. Its pathway is carbohydrate degradation; pentose phosphate pathway; D-ribose 5-phosphate from D-ribulose 5-phosphate (non-oxidative stage): step 1/1. Its function is as follows. Catalyzes the reversible conversion of ribose-5-phosphate to ribulose 5-phosphate. The chain is Ribose-5-phosphate isomerase A from Neisseria meningitidis serogroup C (strain 053442).